The primary structure comprises 64 residues: Large ribosomal subunit protein bL35 (64 aa).

Disordered stretches follow at residues 1 to 22 (MPKAKTHSGASKRFRRTGTGKI) and 34 to 64 (EHKPTTRTRRLEGRTTVSANDTKRVNSLLNG). The span at 34-46 (EHKPTTRTRRLEG) shows a compositional bias: basic and acidic residues. Over residues 50–64 (VSANDTKRVNSLLNG) the composition is skewed to polar residues.

Belongs to the bacterial ribosomal protein bL35 family.

This chain is Large ribosomal subunit protein bL35, found in Mycolicibacterium paratuberculosis (strain ATCC BAA-968 / K-10) (Mycobacterium paratuberculosis).